The primary structure comprises 257 residues: Triosephosphate isomerase (257 aa).

Substrate is bound by residues N11 and K13. The active-site Electrophile is H96. E170 (proton acceptor) is an active-site residue.

It belongs to the triosephosphate isomerase family. Homodimer.

The catalysed reaction is D-glyceraldehyde 3-phosphate = dihydroxyacetone phosphate. It functions in the pathway carbohydrate biosynthesis; gluconeogenesis. The protein operates within carbohydrate degradation; glycolysis; D-glyceraldehyde 3-phosphate from glycerone phosphate: step 1/1. The polypeptide is Triosephosphate isomerase (Giardia intestinalis (Giardia lamblia)).